Consider the following 665-residue polypeptide: Soluble lamin-associated protein of 75 kDa (665 aa).

The tract at residues 309-665 (AFASTSEGPE…GPGKKKAKLT (357 aa)) is disordered. Residues 311–326 (ASTSEGPEKTPVSTRT) are compositionally biased toward polar residues. Residues 327-338 (RSSHLKRPKIGK) show a composition bias toward basic residues. Phosphoserine is present on residues serine 348 and serine 377. Residues 376-397 (SSEEFLEEEPEQGVIDFEDESG) are compositionally biased toward acidic residues. Over residues 412–421 (QKQDGDKDSA) the composition is skewed to basic and acidic residues. The segment covering 440 to 451 (TEDEDSTSEGLE) has biased composition (acidic residues). A phosphoserine mark is found at serine 447 and serine 512. Composition is skewed to polar residues over residues 521–533 (LGSSDNVATVSNI) and 553–566 (VSQNLSPNTTSSVE). A phosphoserine mark is found at serine 610, serine 613, and serine 630. Residues 646-665 (NLRRKAKGHKGPGKKKAKLT) are compositionally biased toward basic residues.

This sequence belongs to the FAM169 family.

The protein localises to the nucleus envelope. Its subcellular location is the nucleus inner membrane. This is Soluble lamin-associated protein of 75 kDa (Fam169a) from Mus musculus (Mouse).